A 230-amino-acid chain; its full sequence is Nicotinamide riboside kinase (230 aa).

Position 12 to 20 (glycine 12 to threonine 20) interacts with ATP. Mg(2+) is bound by residues serine 19 and aspartate 38. Catalysis depends on aspartate 38, which acts as the Proton acceptor. Residues aspartate 38–tyrosine 41 and tryptophan 56–aspartate 57 each bind substrate. Position 153 (arginine 153) interacts with ATP. Residues arginine 154 and glycine 159–tyrosine 160 contribute to the substrate site. Residues arginine 157–glycine 159 and arginine 203–glutamine 205 contribute to the ATP site.

This sequence belongs to the uridine kinase family. NRK subfamily.

It catalyses the reaction beta-nicotinamide D-riboside + ATP = beta-nicotinamide D-ribonucleotide + ADP + H(+). The catalysed reaction is beta-D-ribosylnicotinate + ATP = nicotinate beta-D-ribonucleotide + ADP + H(+). It participates in cofactor biosynthesis; NAD(+) biosynthesis. Its function is as follows. Catalyzes the phosphorylation of nicotinamide riboside (NR) and nicotinic acid riboside (NaR) to form nicotinamide mononucleotide (NMN) and nicotinic acid mononucleotide (NaMN). This chain is Nicotinamide riboside kinase (nrk1), found in Schizosaccharomyces pombe (strain 972 / ATCC 24843) (Fission yeast).